The sequence spans 2157 residues: Unconventional myosin-IXb (2157 aa).

N-acetylserine is present on Ser2. The 100-residue stretch at 15–114 (AAYHLHIYPQ…YYFLLQERNA (100 aa)) folds into the Ras-associating domain. The Myosin motor domain maps to 146-953 (ADFDDLCNLP…ERQALQETLH (808 aa)). 239 to 246 (GESGSGKT) is an ATP binding site. Positions 709 to 734 (AEKAAGMSSPGAQSHPEELPRGASTP) are disordered. A phosphoserine mark is found at Ser716 and Ser717. The segment at 844-855 (KAEPFFIRCIRS) is actin-binding. The segment at 940–1044 (LKETERQALQ…CRGHLQRKSF (105 aa)) is neck or regulatory domain. IQ domains follow at residues 957–977 (VRKILLLQSWFRMVLERRHFL), 979–1000 (MKRAAVTIQACWRSYRVRRALE), 1001–1023 (RTQAAVYLQASWRGYWQRKLYRH), and 1024–1053 (QKQSIIRLQSLCRGHLQRKSFSQMISEKQK). Position 1045 is a phosphoserine (Ser1045). The interval 1045–2157 (SQMISEKQKA…LPPASGQTNG (1113 aa)) is tail. The stretch at 1046–1071 (QMISEKQKAEEKEREALEAARAGAEE) forms a coiled coil. Disordered regions lie at residues 1046-1298 (QMIS…TQIQ), 1320-1410 (AAAS…GSQV), and 1455-1484 (GLEAPSGQQHRHAAGEKRTKEPGGKGKKNR). Composition is skewed to basic and acidic residues over residues 1050 to 1063 (EKQKAEEKEREALE), 1109 to 1122 (SPLEHSSPEKEAPS), 1136 to 1160 (ESHEKVPSSREKRESRRQRGLEHVK), 1168 to 1183 (SCKEESALREPSRRVT), and 1191 to 1201 (LEDKKESREDE). Phosphoserine occurs at positions 1114, 1115, and 1122. Residues 1211-1222 (ENTSQKQPTEQP) are compositionally biased toward polar residues. 4 positions are modified to phosphoserine: Ser1242, Ser1253, Ser1261, and Ser1267. The residue at position 1271 (Thr1271) is a Phosphothreonine. 3 positions are modified to phosphoserine: Ser1290, Ser1323, and Ser1331. Thr1346 bears the Phosphothreonine mark. Ser1354, Ser1356, and Ser1405 each carry phosphoserine. Basic and acidic residues predominate over residues 1467–1478 (AAGEKRTKEPGG). The Phorbol-ester/DAG-type zinc-finger motif lies at 1632–1681 (GHVFASYQVSIPQSCEQCLSYIWLMDKALLCSVCKMTCHKKCVHKIQSHC). A Rho-GAP domain is found at 1703 to 1888 (DSLTSDKASV…MLIKEQMRKY (186 aa)). Positions 1739–1744 (AANRTR) are interaction with RHOA. Positions 1880 to 1901 (LIKEQMRKYKVKMEEISQLEAA) form a coiled coil. Phosphoserine occurs at positions 1926, 1972, 1992, and 1999. Residues 1959–1989 (EDREKEILIERIQSIKEEKEDITYRLPELDP) are a coiled coil. Residues 1980 to 1993 (ITYRLPELDPRGSD) are compositionally biased toward basic and acidic residues. The segment at 1980 to 2157 (ITYRLPELDP…LPPASGQTNG (178 aa)) is disordered. Residue Thr2005 is modified to Phosphothreonine. Residues 2021–2037 (PPAPALPCPGAPTPSPL) are compositionally biased toward pro residues. Ser2050 carries the phosphoserine modification. The segment covering 2081–2093 (PRWAPGAREAAAP) has biased composition (low complexity). The span at 2095 to 2106 (RRREPPARRPDQ) shows a compositional bias: basic and acidic residues. Residue Ser2141 is modified to Phosphoserine.

This sequence belongs to the TRAFAC class myosin-kinesin ATPase superfamily. Myosin family. Interacts (via IQ domains) with CALM. Interacts with RHOA. Interacts (via Rho-GAP domain) with ROBO1; this inhibits the interaction with RHOA and the stimulation of RHOA GTPase activity, and thereby increases the levels of active RHOA. As to expression, detected in peripheral blood leukocytes (at protein level). Expressed predominantly in peripheral blood leukocytes and at lower levels, in thymus, spleen, testis, prostate, ovary, brain, small intestine and lung.

The protein resides in the cytoplasm. The protein localises to the cell cortex. It is found in the perinuclear region. Its subcellular location is the cytoskeleton. Myosins are actin-based motor molecules with ATPase activity. Unconventional myosins serve in intracellular movements. Binds actin with high affinity both in the absence and presence of ATP and its mechanochemical activity is inhibited by calcium ions. Also acts as a GTPase activator for RHOA. Plays a role in the regulation of cell migration via its role as RHOA GTPase activator. This is regulated by its interaction with the SLIT2 receptor ROBO1; interaction with ROBO1 impairs interaction with RHOA and subsequent activation of RHOA GTPase activity, and thereby leads to increased levels of active, GTP-bound RHOA. In Homo sapiens (Human), this protein is Unconventional myosin-IXb (MYO9B).